We begin with the raw amino-acid sequence, 63 residues long: Putative conjugal transfer lipoprotein XF_a0011.1 (63 aa).

The first 15 residues, 1 to 15 (MRYTFGIVTVYLLAG), serve as a signal peptide directing secretion. Cysteine 16 carries the N-palmitoyl cysteine lipid modification. A lipid anchor (S-diacylglycerol cysteine) is attached at cysteine 16.

The protein to B.suis ORF12 in VirB region.

The protein resides in the cell inner membrane. The protein is Putative conjugal transfer lipoprotein XF_a0011.1 of Xylella fastidiosa (strain 9a5c).